A 138-amino-acid chain; its full sequence is MKIVYWSGTGNTEKMAELIAKGIIESGKDVNTINVSDVNIDELLNEDILILGCSAMGDEVLEESEFEPFIEEISTKISGKKVALFGSYGWGDGKWMRDFEERMNGYGCVVVETPLIVQNEPDEAEQDCIEFGKKIANI.

The region spanning M1–A136 is the Flavodoxin-like domain.

Belongs to the flavodoxin family. FMN serves as cofactor.

Functionally, low-potential electron donor to a number of redox enzymes. The sequence is that of Flavodoxin from Clostridium beijerinckii (Clostridium MP).